A 600-amino-acid chain; its full sequence is Elongation factor 4 (600 aa).

The region spanning 4–186 (KNVRNFCIIA…AIVNRIPPPK (183 aa)) is the tr-type G domain. GTP is bound by residues 16–21 (DHGKST) and 133–136 (NKID).

This sequence belongs to the TRAFAC class translation factor GTPase superfamily. Classic translation factor GTPase family. LepA subfamily.

It is found in the cell inner membrane. It carries out the reaction GTP + H2O = GDP + phosphate + H(+). Required for accurate and efficient protein synthesis under certain stress conditions. May act as a fidelity factor of the translation reaction, by catalyzing a one-codon backward translocation of tRNAs on improperly translocated ribosomes. Back-translocation proceeds from a post-translocation (POST) complex to a pre-translocation (PRE) complex, thus giving elongation factor G a second chance to translocate the tRNAs correctly. Binds to ribosomes in a GTP-dependent manner. The polypeptide is Elongation factor 4 (Aquifex aeolicus (strain VF5)).